A 654-amino-acid polypeptide reads, in one-letter code: Acetyl-coenzyme A synthetase (654 aa).

Residues 196-199 and Thr316 contribute to the CoA site; that span reads RGGK. ATP contacts are provided by residues 392–394, 416–421, Asp507, and Arg522; these read GEP and DTWWQT. Position 530 (Ser530) interacts with CoA. Arg533 contributes to the ATP binding site. Residues Val544 and Val549 each contribute to the Mg(2+) site. Residue Lys619 is modified to N6-acetyllysine.

This sequence belongs to the ATP-dependent AMP-binding enzyme family. It depends on Mg(2+) as a cofactor. In terms of processing, acetylated. Deacetylation by the SIR2-homolog deacetylase activates the enzyme.

It catalyses the reaction acetate + ATP + CoA = acetyl-CoA + AMP + diphosphate. In terms of biological role, catalyzes the conversion of acetate into acetyl-CoA (AcCoA), an essential intermediate at the junction of anabolic and catabolic pathways. AcsA undergoes a two-step reaction. In the first half reaction, AcsA combines acetate with ATP to form acetyl-adenylate (AcAMP) intermediate. In the second half reaction, it can then transfer the acetyl group from AcAMP to the sulfhydryl group of CoA, forming the product AcCoA. In Chromobacterium violaceum (strain ATCC 12472 / DSM 30191 / JCM 1249 / CCUG 213 / NBRC 12614 / NCIMB 9131 / NCTC 9757 / MK), this protein is Acetyl-coenzyme A synthetase.